The sequence spans 199 residues: Prostatic spermine-binding protein (199 aa).

The first 18 residues, 1-18, serve as a signal peptide directing secretion; sequence MLLLLTLAFLASPTCRAQ. The region spanning 19–151 is the Jacalin-type lectin domain; the sequence is NVLGNAAGKY…VRGIGFKWGN (133 aa). A glycan (N-linked (GlcNAc...) asparagine) is linked at Asn62. A disordered region spans residues 159 to 199; sequence HYNNKEDKADNKDADNKDADNKDDGDEDDDGNDDDDQKDES. Basic and acidic residues predominate over residues 160-180; sequence YNNKEDKADNKDADNKDADNK. The segment covering 181–199 has biased composition (acidic residues); the sequence is DDGDEDDDGNDDDDQKDES.

This sequence to rat SBP. Prostate.

This protein seems to be functional equivalent to rat prostatic spermine-binding protein, which is involved in polyamine binding. This chain is Prostatic spermine-binding protein (Sbp), found in Mus musculus (Mouse).